A 110-amino-acid chain; its full sequence is DNA-binding protein Pars_1791 (110 aa).

This sequence belongs to the PDCD5 family.

This chain is DNA-binding protein Pars_1791, found in Pyrobaculum arsenaticum (strain DSM 13514 / JCM 11321 / PZ6).